The following is a 210-amino-acid chain: Transcriptional regulator MxiE (210 aa).

An HTH araC/xylS-type domain is found at 99 to 199 (YHLVLYLLRT…GFSARELSNI (101 aa)). DNA-binding regions (H-T-H motif) lie at residues 118-139 (KSLT…RKAL) and 166-189 (ITSA…KTRL).

Necessary for the secretion of ipa invasins. Probable transcriptional regulatory protein. The protein is Transcriptional regulator MxiE (mxiE) of Shigella flexneri.